The following is a 1182-amino-acid chain: Intraflagellar transport protein 122 homolog (1182 aa).

WD repeat units follow at residues 10–50, 51–91, 93–129, 131–169, 174–217, 219–258, 260–300, and 453–492; these read KAEQ…QPLK, GHKD…LKYT, NDSIQCVSYNPVTHQLASCSSSDFGLWSPEQKSVSKH, SSSKITCCSWTNDGQYLALGMANGIISIRNKNGEEKVKI, GSLS…IGKD, PLNFDPCCISYFTKGEYILVGGSDKQVSLFTKDGVRLGTV, EQNS…HGLY, and KQATAVRCLDMSASRNKLAVVDENDTCLVYDIHTKELLFQ.

Component of the IFT complex A (IFT-A) complex. IFT-A complex is divided into a core subcomplex composed of IFT122:IFT140:WDR19 which is associated with TULP3 and a peripheral subcomplex composed of IFT43:WDR35:TTC21B. Interacts with IFT43:WDR35; the interaction connects the 2 IFT-A subcomplexes. Interacts with IFTAP; the interaction associates IFTAP with IFT-A complex.

It is found in the cell projection. Its subcellular location is the cilium. The protein resides in the cytoplasm. The protein localises to the cytoskeleton. It localises to the cilium basal body. Its function is as follows. As a component of the IFT complex A (IFT-A), a complex required for retrograde ciliary transport and entry into cilia of G protein-coupled receptors (GPCRs), it is required in ciliogenesis and ciliary protein trafficking. Involved in cilia formation during neuronal patterning. Acts as a negative regulator of Shh signaling. Required to recruit TULP3 to primary cilia. This is Intraflagellar transport protein 122 homolog from Mus musculus (Mouse).